Consider the following 100-residue polypeptide: Urease subunit gamma (100 aa).

It belongs to the urease gamma subunit family. In terms of assembly, heterotrimer of UreA (gamma), UreB (beta) and UreC (alpha) subunits. Three heterotrimers associate to form the active enzyme.

It localises to the cytoplasm. It carries out the reaction urea + 2 H2O + H(+) = hydrogencarbonate + 2 NH4(+). Its pathway is nitrogen metabolism; urea degradation; CO(2) and NH(3) from urea (urease route): step 1/1. This chain is Urease subunit gamma, found in Cupriavidus necator (strain ATCC 17699 / DSM 428 / KCTC 22496 / NCIMB 10442 / H16 / Stanier 337) (Ralstonia eutropha).